Reading from the N-terminus, the 730-residue chain is Procollagen-lysine,2-oxoglutarate 5-dioxygenase 1 (730 aa).

Positions Met1–Gly20 are cleaved as a signal peptide. Asn200, Asn403, and Asn541 each carry an N-linked (GlcNAc...) asparagine glycan. The Fe2OG dioxygenase domain maps to Gln639 to Pro730. Fe cation-binding residues include His659 and Asp661. N-linked (GlcNAc...) asparagine glycosylation is present at Asn689. Fe cation is bound at residue His711. Arg721 is a catalytic residue.

As to quaternary structure, homodimer. Requires Fe(2+) as cofactor. It depends on L-ascorbate as a cofactor.

The protein resides in the rough endoplasmic reticulum membrane. It catalyses the reaction L-lysyl-[collagen] + 2-oxoglutarate + O2 = (5R)-5-hydroxy-L-lysyl-[collagen] + succinate + CO2. In terms of biological role, forms hydroxylysine residues in -Xaa-Lys-Gly- sequences in collagens. These hydroxylysines serve as sites of attachment for carbohydrate units and are essential for the stability of the intermolecular collagen cross-links. The protein is Procollagen-lysine,2-oxoglutarate 5-dioxygenase 1 (PLOD1) of Gallus gallus (Chicken).